We begin with the raw amino-acid sequence, 377 residues long: Chaperone protein DnaJ (377 aa).

Positions 5–69 (EYYDRLGLSK…QKRAAYDQYG (65 aa)) constitute a J domain. A CR-type zinc finger spans residues 133 to 215 (GAEKEIHYNR…CHGTGREKQS (83 aa)). Residues C146, C149, C163, C166, C189, C192, C203, and C206 each contribute to the Zn(2+) site. CXXCXGXG motif repeat units lie at residues 146–153 (CKTCSGSG), 163–170 (CGRCHGHG), 189–196 (CDVCHGTG), and 203–210 (CQTCHGTG).

The protein belongs to the DnaJ family. In terms of assembly, homodimer. Zn(2+) is required as a cofactor.

It is found in the cytoplasm. In terms of biological role, participates actively in the response to hyperosmotic and heat shock by preventing the aggregation of stress-denatured proteins and by disaggregating proteins, also in an autonomous, DnaK-independent fashion. Unfolded proteins bind initially to DnaJ; upon interaction with the DnaJ-bound protein, DnaK hydrolyzes its bound ATP, resulting in the formation of a stable complex. GrpE releases ADP from DnaK; ATP binding to DnaK triggers the release of the substrate protein, thus completing the reaction cycle. Several rounds of ATP-dependent interactions between DnaJ, DnaK and GrpE are required for fully efficient folding. Also involved, together with DnaK and GrpE, in the DNA replication of plasmids through activation of initiation proteins. The sequence is that of Chaperone protein DnaJ from Streptococcus thermophilus (strain CNRZ 1066).